The chain runs to 331 residues: MIDTSIPLVDLHRHLDGNVRVNTIWELGHQHGIALPADSLETLAPFVQIQGKETSLVAFLKKLDWMVAVLADLDAVKRVAYENVADAALSGLDYAELRFSPYYMAMNHKLPIEGVVEAVVDGVKAGLKDYNVKINLIGILSRSFGQAACTQELEGLLAHKQHLVAMDLAGDEMGFPGELFNDHFKRVRDADLAITAHAGEAAGSQSMWQAIQELGATRIGHGVNAIHDPKLMEYLAKHRIGIESCPTSNLHTSTVASYAEHPFRTFMDAGVLINLNTDDPGVSAIDINHEYRIAKSELKLTDAELAQVQRNGVEMAFLSDSERKALYAAKV.

Residues histidine 12 and histidine 14 each contribute to the Zn(2+) site. Substrate contacts are provided by histidine 14, aspartate 16, and glycine 170. Histidine 197 is a binding site for Zn(2+). The active-site Proton donor is the glutamate 200. Aspartate 278 lines the Zn(2+) pocket. A substrate-binding site is contributed by aspartate 279.

Belongs to the metallo-dependent hydrolases superfamily. Adenosine and AMP deaminases family. Adenosine deaminase subfamily. It depends on Zn(2+) as a cofactor.

It catalyses the reaction adenosine + H2O + H(+) = inosine + NH4(+). The enzyme catalyses 2'-deoxyadenosine + H2O + H(+) = 2'-deoxyinosine + NH4(+). Functionally, catalyzes the hydrolytic deamination of adenosine and 2-deoxyadenosine. In Shewanella baltica (strain OS185), this protein is Adenosine deaminase.